A 297-amino-acid polypeptide reads, in one-letter code: ClpXP adapter protein SpxH (297 aa).

This sequence belongs to the SpxH family. As to quaternary structure, interacts with Spx.

It is found in the cytoplasm. In terms of biological role, adapter protein required for efficient degradation of Spx by ClpXP under non-stress conditions. Interaction with Spx stabilizes Spx and exposes the C-terminus of Spx for recognition and proteolysis by ClpXP. The chain is ClpXP adapter protein SpxH from Bacillus cereus (strain ATCC 14579 / DSM 31 / CCUG 7414 / JCM 2152 / NBRC 15305 / NCIMB 9373 / NCTC 2599 / NRRL B-3711).